The chain runs to 387 residues: Lymphocyte transmembrane adapter 1 (387 aa).

Over 1–37 (MDVTTSAWSETTRRISEPSTLQGTLGSLDKAEDHSSS) the chain is Extracellular. The chain crosses the membrane as a helical; Signal-anchor for type III membrane protein span at residues 38–58 (IFSGFAALLAILLVVAVICVL). Residues 59 to 387 (WCCGKRKKRQ…VCAAEAGARG (329 aa)) are Cytoplasmic-facing. The disordered stretch occupies residues 114-136 (VSTESLLSRNSDSPSSEHVPSRA). Low complexity predominate over residues 118–129 (SLLSRNSDSPSS). Tyr195 is subject to Phosphotyrosine. A disordered region spans residues 230-268 (SEEIDEGCGNASDCTSLGSPGTENSDPLSDGEGSSQTSN). Polar residues predominate over residues 241 to 268 (SDCTSLGSPGTENSDPLSDGEGSSQTSN). A phosphotyrosine mark is found at Tyr270 and Tyr296. Positions 294–387 (RDYENVPPGP…VCAAEAGARG (94 aa)) are disordered. Residues 319-329 (DHVEGRTDGPE) show a composition bias toward basic and acidic residues. Residues 360 to 369 (PWEDAEETSS) are compositionally biased toward acidic residues. Tyr375 bears the Phosphotyrosine mark.

As to quaternary structure, when phosphorylated, interacts with GRB2, PIK3R1 and GRAP2. In terms of processing, phosphorylated on tyrosines upon TCR or BCR activation; which leads to the recruitment of GRB2, PIK3R1 and GRAP2.

It localises to the cell membrane. Its function is as follows. Negatively regulates TCR (T-cell antigen receptor)-mediated signaling in T-cells and BCR (B-cell antigen receptor)-mediated signaling in B-cells. This Bos taurus (Bovine) protein is Lymphocyte transmembrane adapter 1 (LAX1).